The chain runs to 282 residues: NADPH-dependent 7-cyano-7-deazaguanine reductase (282 aa).

88–90 (IES) is a binding site for substrate. NADPH is bound at residue 90–91 (SK). Catalysis depends on Cys-190, which acts as the Thioimide intermediate. Asp-197 functions as the Proton donor in the catalytic mechanism. Residue 229-230 (HE) participates in substrate binding. Residue 258–259 (RG) participates in NADPH binding.

This sequence belongs to the GTP cyclohydrolase I family. QueF type 2 subfamily. Homodimer.

It is found in the cytoplasm. The enzyme catalyses 7-aminomethyl-7-carbaguanine + 2 NADP(+) = 7-cyano-7-deazaguanine + 2 NADPH + 3 H(+). Its pathway is tRNA modification; tRNA-queuosine biosynthesis. Catalyzes the NADPH-dependent reduction of 7-cyano-7-deazaguanine (preQ0) to 7-aminomethyl-7-deazaguanine (preQ1). This chain is NADPH-dependent 7-cyano-7-deazaguanine reductase, found in Shigella flexneri serotype 5b (strain 8401).